The chain runs to 416 residues: Enterobactin exporter EntS (416 aa).

At methionine 1–alanine 21 the chain is on the cytoplasmic side. The chain crosses the membrane as a helical span at residues valine 22–valine 42. Residues glutamine 43–glycine 55 lie on the Periplasmic side of the membrane. The helical transmembrane segment at leucine 56–alanine 76 threads the bilayer. Topologically, residues aspartate 77–lysine 83 are cytoplasmic. Residues valine 84–leucine 104 traverse the membrane as a helical segment. Over leucine 105–serine 109 the chain is Periplasmic. Residues leucine 110–alanine 130 traverse the membrane as a helical segment. Residues leucine 131–arginine 156 are Cytoplasmic-facing. Residues leucine 157–tryptophan 177 traverse the membrane as a helical segment. Asparagine 178 is a topological domain (periplasmic). The helical transmembrane segment at tyrosine 179–leucine 199 threads the bilayer. Over proline 200–arginine 218 the chain is Cytoplasmic. The helical transmembrane segment at phenylalanine 219–alanine 239 threads the bilayer. Residues serine 240–serine 256 are Periplasmic-facing. Residues alanine 257–threonine 277 form a helical membrane-spanning segment. Over serine 278 to proline 287 the chain is Cytoplasmic. The chain crosses the membrane as a helical span at residues glycine 288 to leucine 307. The Periplasmic segment spans residues methionine 308–leucine 313. A helical transmembrane segment spans residues glycine 314 to leucine 336. At glutamine 337–asparagine 356 the chain is on the cytoplasmic side. The helical transmembrane segment at valine 357–valine 377 threads the bilayer. Alanine 378 is a topological domain (periplasmic). Residues serine 379–valine 399 traverse the membrane as a helical segment. Over glutamate 400 to serine 416 the chain is Cytoplasmic.

It belongs to the major facilitator superfamily. EntS (TC 2.A.1.38) family.

The protein resides in the cell inner membrane. Its function is as follows. Component of an export pathway for enterobactin. This chain is Enterobactin exporter EntS, found in Escherichia coli O6:K15:H31 (strain 536 / UPEC).